Here is a 612-residue protein sequence, read N- to C-terminus: Citryl-spermidine/3,4-dihydroxybenzoyl-citryl-spermidine:spermidine ligase (612 aa).

ATP contacts are provided by residues 282-284, Lys298, Arg310, Tyr390, and Glu461; that span reads SMR.

It belongs to the IucA/IucC family. Homodimer.

It catalyses the reaction N(8)-citryl-spermidine + spermidine + ATP = N(8),N'(8)-citryl-bis(spermidine) + AMP + diphosphate + H(+). The catalysed reaction is N(1)-(3,4-dihydroxybenzoyl)-N(8)-citryl-spermidine + spermidine + ATP = N(1)-(3,4-dihydroxybenzoyl)-N(8),N'(8)-citryl-bis(spermidine) + AMP + diphosphate + H(+). It participates in siderophore biosynthesis; petrobactin biosynthesis. Functionally, involved in the biosynthesis of petrobactin, a catecholate siderophore that functions in both iron acquisition and virulence. Catalyzes the ATP-dependent condensation of spermidine with N(8)-citryl-spermidine or N(1)-(3,4-dihydroxbenzoyl)-N(8)-citryl-spermidine, two intermediates in petrobactin biosynthesis pathway. The polypeptide is Citryl-spermidine/3,4-dihydroxybenzoyl-citryl-spermidine:spermidine ligase (Bacillus anthracis).